A 262-amino-acid polypeptide reads, in one-letter code: Sulfur carrier protein FdhD (262 aa).

Cys107 acts as the Cysteine persulfide intermediate in catalysis.

The protein belongs to the FdhD family.

The protein localises to the cytoplasm. Its function is as follows. Required for formate dehydrogenase (FDH) activity. Acts as a sulfur carrier protein that transfers sulfur from IscS to the molybdenum cofactor prior to its insertion into FDH. The sequence is that of Sulfur carrier protein FdhD from Bacillus pumilus (strain SAFR-032).